The sequence spans 261 residues: MPRKSVLDFAKGRGAYVWITAYDYPTAKAVDEAGVDGILVGDSLGMVLLGLPNTLGVTMEDMVRHTEAVARARPRALVVADMPFMSYETGPEDALRNAARLVKAGADAVKLEGGTEYAPIVERLVKAGIPVMGHIGLTPQRFLTIGGFKMVGKTEEQRRKILEDAKALRDAGVFSIVLEFVPASLAREVTQAVDVPTICIGSGPHCDGQILVLHDVVGLTERPPSFAKKYADVAAAIREAVSKYAEEVRKGLFPAREHYRE.

The Mg(2+) site is built by Asp-42 and Asp-81. Residues 42–43, Asp-81, and Lys-110 contribute to the 3-methyl-2-oxobutanoate site; that span reads DS. Glu-112 is a Mg(2+) binding site. Glu-179 acts as the Proton acceptor in catalysis.

The protein belongs to the PanB family. Homodecamer; pentamer of dimers. The cofactor is Mg(2+).

It is found in the cytoplasm. The enzyme catalyses 3-methyl-2-oxobutanoate + (6R)-5,10-methylene-5,6,7,8-tetrahydrofolate + H2O = 2-dehydropantoate + (6S)-5,6,7,8-tetrahydrofolate. It functions in the pathway cofactor biosynthesis; coenzyme A biosynthesis. Functionally, catalyzes the reversible reaction in which hydroxymethyl group from 5,10-methylenetetrahydrofolate is transferred onto alpha-ketoisovalerate to form ketopantoate. The sequence is that of 3-methyl-2-oxobutanoate hydroxymethyltransferase from Pyrobaculum neutrophilum (strain DSM 2338 / JCM 9278 / NBRC 100436 / V24Sta) (Thermoproteus neutrophilus).